The following is a 317-amino-acid chain: Beta-ketoacyl-[acyl-carrier-protein] synthase III (317 aa).

Active-site residues include Cys112 and His244. The interval 245-249 (QANLR) is ACP-binding. Asn274 is a catalytic residue.

This sequence belongs to the thiolase-like superfamily. FabH family. Homodimer.

It is found in the cytoplasm. It catalyses the reaction malonyl-[ACP] + acetyl-CoA + H(+) = 3-oxobutanoyl-[ACP] + CO2 + CoA. Its pathway is lipid metabolism; fatty acid biosynthesis. In terms of biological role, catalyzes the condensation reaction of fatty acid synthesis by the addition to an acyl acceptor of two carbons from malonyl-ACP. Catalyzes the first condensation reaction which initiates fatty acid synthesis and may therefore play a role in governing the total rate of fatty acid production. Possesses both acetoacetyl-ACP synthase and acetyl transacylase activities. Its substrate specificity determines the biosynthesis of branched-chain and/or straight-chain of fatty acids. This Shigella boydii serotype 4 (strain Sb227) protein is Beta-ketoacyl-[acyl-carrier-protein] synthase III.